We begin with the raw amino-acid sequence, 155 residues long: 6,7-dimethyl-8-ribityllumazine synthase (155 aa).

5-amino-6-(D-ribitylamino)uracil is bound by residues phenylalanine 23, alanine 57–glutamate 59, and alanine 81–isoleucine 83. Alanine 86–threonine 87 contacts (2S)-2-hydroxy-3-oxobutyl phosphate. Histidine 89 serves as the catalytic Proton donor. Phenylalanine 114 lines the 5-amino-6-(D-ribitylamino)uracil pocket. Arginine 128 lines the (2S)-2-hydroxy-3-oxobutyl phosphate pocket.

Belongs to the DMRL synthase family.

It carries out the reaction (2S)-2-hydroxy-3-oxobutyl phosphate + 5-amino-6-(D-ribitylamino)uracil = 6,7-dimethyl-8-(1-D-ribityl)lumazine + phosphate + 2 H2O + H(+). It functions in the pathway cofactor biosynthesis; riboflavin biosynthesis; riboflavin from 2-hydroxy-3-oxobutyl phosphate and 5-amino-6-(D-ribitylamino)uracil: step 1/2. Catalyzes the formation of 6,7-dimethyl-8-ribityllumazine by condensation of 5-amino-6-(D-ribitylamino)uracil with 3,4-dihydroxy-2-butanone 4-phosphate. This is the penultimate step in the biosynthesis of riboflavin. This Geotalea uraniireducens (strain Rf4) (Geobacter uraniireducens) protein is 6,7-dimethyl-8-ribityllumazine synthase.